A 411-amino-acid chain; its full sequence is Arginine deiminase (411 aa).

The active-site Amidino-cysteine intermediate is Cys-401.

Belongs to the arginine deiminase family.

The protein resides in the cytoplasm. It carries out the reaction L-arginine + H2O = L-citrulline + NH4(+). It participates in amino-acid degradation; L-arginine degradation via ADI pathway; carbamoyl phosphate from L-arginine: step 1/2. The polypeptide is Arginine deiminase (Staphylococcus haemolyticus (strain JCSC1435)).